A 447-amino-acid chain; its full sequence is Probable glycine dehydrogenase (decarboxylating) subunit 1 (447 aa).

This sequence belongs to the GcvP family. N-terminal subunit subfamily. As to quaternary structure, the glycine cleavage system is composed of four proteins: P, T, L and H. In this organism, the P 'protein' is a heterodimer of two subunits.

The enzyme catalyses N(6)-[(R)-lipoyl]-L-lysyl-[glycine-cleavage complex H protein] + glycine + H(+) = N(6)-[(R)-S(8)-aminomethyldihydrolipoyl]-L-lysyl-[glycine-cleavage complex H protein] + CO2. In terms of biological role, the glycine cleavage system catalyzes the degradation of glycine. The P protein binds the alpha-amino group of glycine through its pyridoxal phosphate cofactor; CO(2) is released and the remaining methylamine moiety is then transferred to the lipoamide cofactor of the H protein. The protein is Probable glycine dehydrogenase (decarboxylating) subunit 1 of Bacillus anthracis (strain A0248).